Consider the following 554-residue polypeptide: Intraflagellar transport protein 56 (554 aa).

The interval 1-23 (MMLSRAKPAVGNEVQQIDKKKKK) is disordered. 4 TPR repeats span residues 57–90 (EDTE…EGCN), 92–125 (DVWV…LQNR), 151–184 (IEDQ…NRDF), and 468–501 (ANDC…EGKR).

Belongs to the IFT56 family. In terms of assembly, component of the IFT complex B.

It localises to the cell projection. The protein localises to the cilium. Its function is as follows. Component of the intraflagellar transport (IFT) complex B required for transport of proteins in the motile cilium. Required for transport of specific ciliary cargo proteins related to motility, while it is neither required for IFT complex B assembly or motion nor for cilium assembly. Plays a key role in maintaining the integrity of the IFT complex B and the proper ciliary localization of the IFT complex B components. Essential for maintaining proper microtubule organization within the ciliary axoneme. This chain is Intraflagellar transport protein 56, found in Xenopus tropicalis (Western clawed frog).